Consider the following 68-residue polypeptide: Large ribosomal subunit protein uL29 (68 aa).

It belongs to the universal ribosomal protein uL29 family.

This chain is Large ribosomal subunit protein uL29, found in Wigglesworthia glossinidia brevipalpis.